A 340-amino-acid chain; its full sequence is tRNA N6-adenosine threonylcarbamoyltransferase (340 aa).

Fe cation-binding residues include His111 and His115. Substrate contacts are provided by residues 134–138 (LVSGG), Asp167, Gly180, and Asn276. Position 304 (Asp304) interacts with Fe cation.

The protein belongs to the KAE1 / TsaD family. Fe(2+) is required as a cofactor.

It is found in the cytoplasm. It catalyses the reaction L-threonylcarbamoyladenylate + adenosine(37) in tRNA = N(6)-L-threonylcarbamoyladenosine(37) in tRNA + AMP + H(+). Required for the formation of a threonylcarbamoyl group on adenosine at position 37 (t(6)A37) in tRNAs that read codons beginning with adenine. Is involved in the transfer of the threonylcarbamoyl moiety of threonylcarbamoyl-AMP (TC-AMP) to the N6 group of A37, together with TsaE and TsaB. TsaD likely plays a direct catalytic role in this reaction. The chain is tRNA N6-adenosine threonylcarbamoyltransferase from Helicobacter pylori (strain Shi470).